The sequence spans 488 residues: F-box protein At3g60790 (488 aa).

The segment at 1–21 is disordered; sequence MTTQSSSSSSSLPSSLSSTPP. The F-box domain maps to 49–95; the sequence is VDRISMLPDEMLQKILSTLSTKDAVITSTLSKRWVDQWKRIPHLCVD.

This chain is F-box protein At3g60790, found in Arabidopsis thaliana (Mouse-ear cress).